The following is a 104-amino-acid chain: Protein U9 (104 aa).

A helical membrane pass occupies residues 37–54 (GVQGLNADCSYVKSQCIK).

Its subcellular location is the host membrane. This chain is Protein U9 (U9), found in Human herpesvirus 6B (HHV-6 variant B).